The sequence spans 246 residues: Large ribosomal subunit protein uL3 (246 aa).

Gln151 carries the N5-methylglutamine modification.

It belongs to the universal ribosomal protein uL3 family. Part of the 50S ribosomal subunit. Forms a cluster with proteins L14 and L19. In terms of processing, methylated by PrmB.

Its function is as follows. One of the primary rRNA binding proteins, it binds directly near the 3'-end of the 23S rRNA, where it nucleates assembly of the 50S subunit. In Bartonella henselae (strain ATCC 49882 / DSM 28221 / CCUG 30454 / Houston 1) (Rochalimaea henselae), this protein is Large ribosomal subunit protein uL3.